The sequence spans 418 residues: Aminodeoxyfutalosine deaminase (418 aa).

Histidine 97 and histidine 99 together coordinate Zn(2+). Substrate-binding residues include glutamate 173 and histidine 211. Zn(2+) is bound at residue histidine 238. Glutamate 241 functions as the Proton donor in the catalytic mechanism. Zn(2+) is bound at residue aspartate 352.

The protein belongs to the metallo-dependent hydrolases superfamily. Requires Zn(2+) as cofactor.

The catalysed reaction is 6-amino-6-deoxyfutalosine + H2O + H(+) = futalosine + NH4(+). The protein operates within quinol/quinone metabolism; menaquinone biosynthesis. Functionally, catalyzes the deamination of aminodeoxyfutalosine (AFL) into futalosine (FL). To a lesser extent, can also deaminate 5'-deoxyadenosine, 5'-methylthioadenosine, 2'-deoxyadenosine, adenosine, 1-(6-amino-9H-purin-9-yl)-1-deoxy-N-ethyl-beta-D-ribofuranuronamide (NECA), and S-adenosylhomocysteine. In Deinococcus radiodurans (strain ATCC 13939 / DSM 20539 / JCM 16871 / CCUG 27074 / LMG 4051 / NBRC 15346 / NCIMB 9279 / VKM B-1422 / R1), this protein is Aminodeoxyfutalosine deaminase.